Consider the following 257-residue polypeptide: Phycoerythrobilin:ferredoxin oxidoreductase (257 aa).

This sequence belongs to the HY2 family.

The catalysed reaction is (3Z)-phycoerythrobilin + oxidized 2[4Fe-4S]-[ferredoxin] = 15,16-dihydrobiliverdin + reduced 2[4Fe-4S]-[ferredoxin] + 2 H(+). In terms of biological role, catalyzes the two-electron reduction of the C2 and C3(1) diene system of 15,16-dihydrobiliverdin. The protein is Phycoerythrobilin:ferredoxin oxidoreductase (pebB) of Synechococcus sp. (strain WH8020).